The following is a 296-amino-acid chain: Probable endonuclease 4 (296 aa).

Residues histidine 68, histidine 109, glutamate 144, aspartate 178, histidine 181, histidine 213, aspartate 226, histidine 228, and glutamate 258 each coordinate Zn(2+).

It belongs to the AP endonuclease 2 family. Zn(2+) is required as a cofactor.

The catalysed reaction is Endonucleolytic cleavage to 5'-phosphooligonucleotide end-products.. Endonuclease IV plays a role in DNA repair. It cleaves phosphodiester bonds at apurinic or apyrimidinic (AP) sites, generating a 3'-hydroxyl group and a 5'-terminal sugar phosphate. The protein is Probable endonuclease 4 of Staphylococcus aureus (strain NCTC 8325 / PS 47).